Reading from the N-terminus, the 338-residue chain is General transcription and DNA repair factor IIH subunit TFB4 (338 aa).

Methionine 1 is subject to N-acetylmethionine. The C4-type zinc-finger motif lies at 289 to 308; that stretch reads CSVCLCVLSIIPPGNKCPAC.

It belongs to the TFB4 family. In terms of assembly, component of the 7-subunit TFIIH core complex composed of XPB/SSL2, XPD/RAD3, SSL1, TFB1, TFB2, TFB4 and TFB5, which is active in NER. The core complex associates with the 3-subunit CTD-kinase module TFIIK composed of CCL1, KIN28 and TFB3 to form the 10-subunit holoenzyme (holo-TFIIH) active in transcription. An additionnal subunit, TFB6, plays a role in the dissociation of the SSL2 helicase from TFIIH after transcription initiation.

The protein resides in the nucleus. Its function is as follows. Component of the general transcription and DNA repair factor IIH (TFIIH) core complex, which is involved in general and transcription-coupled nucleotide excision repair (NER) of damaged DNA and, when complexed to TFIIK, in RNA transcription by RNA polymerase II. In NER, TFIIH acts by opening DNA around the lesion to allow the excision of the damaged oligonucleotide and its replacement by a new DNA fragment. In transcription, TFIIH has an essential role in transcription initiation. When the pre-initiation complex (PIC) has been established, TFIIH is required for promoter opening and promoter escape. Phosphorylation of the C-terminal tail (CTD) of the largest subunit of RNA polymerase II by the kinase module TFIIK controls the initiation of transcription. In Saccharomyces cerevisiae (strain ATCC 204508 / S288c) (Baker's yeast), this protein is General transcription and DNA repair factor IIH subunit TFB4 (TFB4).